The sequence spans 865 residues: TATA box-binding protein-associated factor RNA polymerase I subunit B (865 aa).

The segment at 1-33 (MHSAKNEKCNACGGYRFSVNDGFKYCDRCGALF) adopts an RRN7-type zinc-finger fold. Positions 9, 12, 26, and 29 each coordinate Zn(2+). The B-reader stretch occupies residues 35–99 (NFEELEEEEG…DFLQQQAIKG (65 aa)). Positions 100–111 (EELELPHDATPD) are B-linker. The N-terminal cyclin fold stretch occupies residues 112–348 (YLYRLALRLF…SQPERMKQGE (237 aa)). The segment at 233-261 (DEDGDQDAQGGQQLDDLTLETTQNPDESI) is disordered. Residues 239–248 (DAQGGQQLDD) show a composition bias toward low complexity. Polar residues predominate over residues 252–261 (ETTQNPDESI). Residues 349–496 (VVKPTIVDYA…LLTLRLTFQL (148 aa)) form a C-terminal cyclin fold region.

Belongs to the RRN7/TAF1B family.

The protein resides in the nucleus. It localises to the nucleolus. In terms of biological role, component of RNA polymerase I core factor complex that acts as a GTF2B/TFIIB-like factor and plays a key role in multiple steps during transcription initiation such as pre-initiation complex (PIC) assembly and postpolymerase recruitment events in polymerase I (Pol I) transcription. Binds rDNA promoters and plays a role in Pol I recruitment. The chain is TATA box-binding protein-associated factor RNA polymerase I subunit B from Caenorhabditis elegans.